The sequence spans 118 residues: Ribonuclease P protein component (118 aa).

It belongs to the RnpA family. In terms of assembly, consists of a catalytic RNA component (M1 or rnpB) and a protein subunit.

It catalyses the reaction Endonucleolytic cleavage of RNA, removing 5'-extranucleotides from tRNA precursor.. RNaseP catalyzes the removal of the 5'-leader sequence from pre-tRNA to produce the mature 5'-terminus. It can also cleave other RNA substrates such as 4.5S RNA. The protein component plays an auxiliary but essential role in vivo by binding to the 5'-leader sequence and broadening the substrate specificity of the ribozyme. This Mycobacterium sp. (strain KMS) protein is Ribonuclease P protein component.